Here is a 55-residue protein sequence, read N- to C-terminus: Large ribosomal subunit protein bL33 (55 aa).

This sequence belongs to the bacterial ribosomal protein bL33 family.

The protein is Large ribosomal subunit protein bL33 of Methylorubrum extorquens (strain CM4 / NCIMB 13688) (Methylobacterium extorquens).